The following is an 88-amino-acid chain: HssA/B-like protein 17 (88 aa).

The protein belongs to the hssA/B family.

This is HssA/B-like protein 17 (hssl17) from Dictyostelium discoideum (Social amoeba).